A 228-amino-acid chain; its full sequence is DNA mismatch repair protein MutH (228 aa).

The protein belongs to the MutH family.

The protein resides in the cytoplasm. Sequence-specific endonuclease that cleaves unmethylated GATC sequences. It is involved in DNA mismatch repair. This Yersinia enterocolitica serotype O:8 / biotype 1B (strain NCTC 13174 / 8081) protein is DNA mismatch repair protein MutH.